The chain runs to 106 residues: uncharacterized protein (106 aa).

This is an uncharacterized protein from Escherichia coli (strain K12).